The primary structure comprises 254 residues: MQYQVDTHTHTVASSHAYSTIHDYIAVAKQKGIRLFANTDHGPAMADAPHFWHFVNLRVLPRMVDGVGILRGIEANIKNIDGEIDFFGDYLKQLDIVLAGFHEPVYPPSDKATHTEAMINTIKSGKVDIITHPGNPAYPIDIEAVARAAAEYGVALEINNSSFEVSRKGSEANCTAIAKAAKEFGTILVMGSDSHVAFSLGGFARAQAIIDEVAYPPSRLLNRSPSALLAFLAARGHETVADLIPLFSDDEPCC.

Zn(2+)-binding residues include H8, H10, H16, H41, E74, H102, H132, D193, and H195.

This sequence belongs to the PHP family. Zn(2+) serves as cofactor.

This chain is Probable phosphatase Sbal_1472, found in Shewanella baltica (strain OS155 / ATCC BAA-1091).